The chain runs to 441 residues: Serine hydroxymethyltransferase (441 aa).

Residue 124-126 (GHI) coordinates (6S)-5,6,7,8-tetrahydrofolate. Lysine 239 bears the N6-(pyridoxal phosphate)lysine mark.

This sequence belongs to the SHMT family. As to quaternary structure, homodimer. Pyridoxal 5'-phosphate is required as a cofactor.

It is found in the cytoplasm. Its pathway is amino-acid biosynthesis; glycine biosynthesis; glycine from L-serine: step 1/1. Functionally, catalyzes the reversible interconversion of serine and glycine with a modified folate serving as the one-carbon carrier. Also exhibits a pteridine-independent aldolase activity toward beta-hydroxyamino acids, producing glycine and aldehydes, via a retro-aldol mechanism. This Cenarchaeum symbiosum (strain A) protein is Serine hydroxymethyltransferase.